A 141-amino-acid chain; its full sequence is Hemoglobin subunit alpha-D (141 aa).

One can recognise a Globin domain in the interval 1 to 141; the sequence is MLTADDKKIL…VAAVLAEKYR (141 aa). Residues histidine 58 and histidine 87 each contribute to the heme b site.

Belongs to the globin family. Heterotetramer of two alpha-D chains and two beta chains. Red blood cells.

Functionally, involved in oxygen transport from the lung to the various peripheral tissues. In Branta canadensis (Canada goose), this protein is Hemoglobin subunit alpha-D (HBAD).